The following is a 668-amino-acid chain: Phosphoglycerate transport system sensor protein PgtB (668 aa).

Transmembrane regions (helical) follow at residues 20–40 (GAFLTGALLTLIVSMVSLYSW) and 342–362 (LILVATLLALLLAWGLNHYFI). The region spanning 364 to 416 (SRLVKRFTALNQAVVQIGLGRTDSTIPVYGRDELGRIARLLRHTLGQLNMQRR) is the HAMP domain. One can recognise a Histidine kinase domain in the interval 454–663 (TLAHEINQPL…CVVLQFSVTD (210 aa)). His457 carries the phosphohistidine; by autocatalysis modification.

It localises to the cell inner membrane. It carries out the reaction ATP + protein L-histidine = ADP + protein N-phospho-L-histidine.. Its function is as follows. Member of the two-component regulatory system PgtB/PgtA that regulates the inducible phosphoglycerate transport system. Activates PgtA by phosphorylation. This is Phosphoglycerate transport system sensor protein PgtB (pgtB) from Salmonella typhimurium (strain LT2 / SGSC1412 / ATCC 700720).